The following is a 103-amino-acid chain: Urease subunit beta (103 aa).

This sequence belongs to the urease beta subunit family. In terms of assembly, heterotrimer of UreA (gamma), UreB (beta) and UreC (alpha) subunits. Three heterotrimers associate to form the active enzyme.

It is found in the cytoplasm. It carries out the reaction urea + 2 H2O + H(+) = hydrogencarbonate + 2 NH4(+). The protein operates within nitrogen metabolism; urea degradation; CO(2) and NH(3) from urea (urease route): step 1/1. Functionally, ureolysis may allow urea to be employed as a nitrogen source for growth and produces ammonia which may protect from killing at low pH. The chain is Urease subunit beta from Streptococcus salivarius (strain 57.I).